The primary structure comprises 191 residues: MSFVNRIRDIVGLNESLDYDEEYETYDVAADSYNGYNDAAETSSRRRQRNHTPTASIEPVSTASNVIGLPGLSSSSEVVVMEPRSFEEMPQAIQALRERKTIVLNLTMMEPDQAQRAVDFVAGGTFAIDGHQERVGESIFLFTPSCVHVTTQGGEQYLNESPAQPVQTTTSFGRTATPTPAWGTDSRYAAQ.

The segment covering 157–178 (YLNESPAQPVQTTTSFGRTATP) has biased composition (polar residues). The segment at 157-191 (YLNESPAQPVQTTTSFGRTATPTPAWGTDSRYAAQ) is disordered.

This sequence belongs to the SepF family. Homodimer. Interacts with FtsZ.

The protein localises to the cytoplasm. Cell division protein that is part of the divisome complex and is recruited early to the Z-ring. Probably stimulates Z-ring formation, perhaps through the cross-linking of FtsZ protofilaments. Its function overlaps with FtsA. The polypeptide is Cell division protein SepF (Synechococcus elongatus (strain ATCC 33912 / PCC 7942 / FACHB-805) (Anacystis nidulans R2)).